The following is a 514-amino-acid chain: uncharacterized protein (514 aa).

This is an uncharacterized protein from Caenorhabditis elegans.